A 290-amino-acid polypeptide reads, in one-letter code: 4-diphosphocytidyl-2-C-methyl-D-erythritol kinase (290 aa).

Lys-13 is a catalytic residue. ATP is bound at residue 96-106; the sequence is PMGGGIGGGSS. The active site involves Asp-138.

Belongs to the GHMP kinase family. IspE subfamily.

The enzyme catalyses 4-CDP-2-C-methyl-D-erythritol + ATP = 4-CDP-2-C-methyl-D-erythritol 2-phosphate + ADP + H(+). The protein operates within isoprenoid biosynthesis; isopentenyl diphosphate biosynthesis via DXP pathway; isopentenyl diphosphate from 1-deoxy-D-xylulose 5-phosphate: step 3/6. Catalyzes the phosphorylation of the position 2 hydroxy group of 4-diphosphocytidyl-2C-methyl-D-erythritol. The polypeptide is 4-diphosphocytidyl-2-C-methyl-D-erythritol kinase (Vibrio campbellii (strain ATCC BAA-1116)).